Consider the following 318-residue polypeptide: Ribose-phosphate pyrophosphokinase 1 (318 aa).

ATP is bound at residue 96–101 (RQDKKD). Mg(2+) is bound by residues D128, H130, D139, and D143. Residue H130 participates in ATP binding. A binding of phosphoribosylpyrophosphate region spans residues 212–227 (KDRVAILVDDMADTCG).

Belongs to the ribose-phosphate pyrophosphokinase family. Homodimer. The active form is probably a hexamer composed of 3 homodimers. Mg(2+) serves as cofactor.

The catalysed reaction is D-ribose 5-phosphate + ATP = 5-phospho-alpha-D-ribose 1-diphosphate + AMP + H(+). It participates in metabolic intermediate biosynthesis; 5-phospho-alpha-D-ribose 1-diphosphate biosynthesis; 5-phospho-alpha-D-ribose 1-diphosphate from D-ribose 5-phosphate (route I): step 1/1. Activated by magnesium and inorganic phosphate. Catalyzes the synthesis of phosphoribosylpyrophosphate (PRPP) that is essential for nucleotide synthesis. This Macaca fascicularis (Crab-eating macaque) protein is Ribose-phosphate pyrophosphokinase 1 (PRPS1).